A 490-amino-acid chain; its full sequence is ATP synthase subunit beta, chloroplastic (490 aa).

170-177 (GGAGVGKT) serves as a coordination point for ATP.

Belongs to the ATPase alpha/beta chains family. In terms of assembly, F-type ATPases have 2 components, CF(1) - the catalytic core - and CF(0) - the membrane proton channel. CF(1) has five subunits: alpha(3), beta(3), gamma(1), delta(1), epsilon(1). CF(0) has four main subunits: a(1), b(1), b'(1) and c(9-12).

It is found in the plastid. Its subcellular location is the chloroplast thylakoid membrane. The catalysed reaction is ATP + H2O + 4 H(+)(in) = ADP + phosphate + 5 H(+)(out). Functionally, produces ATP from ADP in the presence of a proton gradient across the membrane. The catalytic sites are hosted primarily by the beta subunits. The polypeptide is ATP synthase subunit beta, chloroplastic (Ipomoea aquatica (Water spinach)).